Reading from the N-terminus, the 803-residue chain is Rho guanine nucleotide exchange factor 7 (803 aa).

N-acetylmethionine is present on M1. In terms of domain architecture, Calponin-homology (CH) spans 1-133; that stretch reads MNSAEQTVTW…SLVTLNKVTA (133 aa). N2 is subject to N-acetylthreonine. Phosphoserine occurs at positions 153 and 176. Positions 184-243 constitute an SH3 domain; the sequence is NNQLVVRAKFNFQQTNEDELSFSKGDVIHVTRVEEGGWWEGTLNGRTGWFPSNYVREVKA. S249 and S257 each carry phosphoserine. The DH domain occupies 271-451; the sequence is YYNVVLQNIL…KNLSAQCQEV (181 aa). The PH domain maps to 473 to 578; that stretch reads DIKTLGNVTY…WVEHLQKQTK (106 aa). S518, C560, and V579 each carry phosphoserine. Positions 580-655 are disordered; sequence TSVGNPTIKP…TPKPWSLSCL (76 aa). Positions 593–606 are enriched in polar residues; it reads PSHTLPSHPVTPSS. A phosphoserine mark is found at K645 and S664. A compositionally biased stretch (basic residues) spans 678–690; sequence KTMKKLLPKRKPE. 2 disordered regions span residues 678–704 and 748–773; these read KTMK…RKST and DDQP…LSED. Residues 691 to 700 are compositionally biased toward basic and acidic residues; the sequence is RKPSDEEFAS. The residue at position 694 (S694) is a Phosphoserine; by CaMK1. Low complexity predominate over residues 752-765; the sequence is SLDSLGRRSSLSRL.

Interacts with PAK kinases through the SH3 domain. Interacts with GIT1 and TGFB1I1. Interacts with PTK2/FAK1 and RAC1. Interacts with ITCH and PARVB. Interacts with unphosphorylated PAK1. Interacts with SCRIB; interaction is direct and may play a role in regulation of apoptosis. Interacts with FRMPD4 (via N-terminus). Interacts with CaMK1. Interacts with BIN2. Interacts with YWHAZ. Interacts (via PH domain) with NOX1 (via FAD-binding FR-type domain). In terms of assembly, interacts with SNX27. Phosphorylated by PTK2/FAK1; this promotes interaction with RAC1. Phosphorylated on Ser-694 by CaMK1; enhancement of GEF activity and downstream activation of RAC1.

It is found in the cell junction. The protein resides in the focal adhesion. The protein localises to the cell projection. It localises to the ruffle. Its subcellular location is the cytoplasm. It is found in the cell cortex. The protein resides in the lamellipodium. Functionally, acts as a RAC1 guanine nucleotide exchange factor (GEF) and can induce membrane ruffling. Functions in cell migration, attachment and cell spreading. Promotes targeting of RAC1 to focal adhesions. May function as a positive regulator of apoptosis. Downstream of NMDA receptors and CaMKK-CaMK1 signaling cascade, promotes the formation of spines and synapses in hippocampal neurons. The protein is Rho guanine nucleotide exchange factor 7 (ARHGEF7) of Homo sapiens (Human).